The sequence spans 368 residues: tRNA-specific 2-thiouridylase MnmA (368 aa).

ATP-binding positions include 11 to 18 (GMSGGVDS) and Met37. An interaction with target base in tRNA region spans residues 97–99 (NPD). Cys102 serves as the catalytic Nucleophile. Cysteines 102 and 199 form a disulfide. Gly127 serves as a coordination point for ATP. The interaction with tRNA stretch occupies residues 149–151 (KDQ). Cys199 functions as the Cysteine persulfide intermediate in the catalytic mechanism. An interaction with tRNA region spans residues 311 to 312 (RY).

This sequence belongs to the MnmA/TRMU family. Interacts with TusE.

The protein localises to the cytoplasm. It carries out the reaction S-sulfanyl-L-cysteinyl-[protein] + uridine(34) in tRNA + AH2 + ATP = 2-thiouridine(34) in tRNA + L-cysteinyl-[protein] + A + AMP + diphosphate + H(+). In terms of biological role, catalyzes the 2-thiolation of uridine at the wobble position (U34) of tRNA(Lys), tRNA(Glu) and tRNA(Gln), leading to the formation of s(2)U34, the first step of tRNA-mnm(5)s(2)U34 synthesis. Sulfur is provided by IscS, via a sulfur-relay system. Binds ATP and its substrate tRNAs. The sequence is that of tRNA-specific 2-thiouridylase MnmA from Escherichia coli (strain SMS-3-5 / SECEC).